The chain runs to 395 residues: Phosphopentomutase (395 aa).

Residues Asp13, Asp288, His293, Asp329, His330, and His341 each contribute to the Mn(2+) site.

This sequence belongs to the phosphopentomutase family. It depends on Mn(2+) as a cofactor.

The protein resides in the cytoplasm. It catalyses the reaction 2-deoxy-alpha-D-ribose 1-phosphate = 2-deoxy-D-ribose 5-phosphate. The enzyme catalyses alpha-D-ribose 1-phosphate = D-ribose 5-phosphate. The protein operates within carbohydrate degradation; 2-deoxy-D-ribose 1-phosphate degradation; D-glyceraldehyde 3-phosphate and acetaldehyde from 2-deoxy-alpha-D-ribose 1-phosphate: step 1/2. In terms of biological role, isomerase that catalyzes the conversion of deoxy-ribose 1-phosphate (dRib-1-P) and ribose 1-phosphate (Rib-1-P) to deoxy-ribose 5-phosphate (dRib-5-P) and ribose 5-phosphate (Rib-5-P), respectively. In Agathobacter rectalis (strain ATCC 33656 / DSM 3377 / JCM 17463 / KCTC 5835 / VPI 0990) (Eubacterium rectale), this protein is Phosphopentomutase.